Reading from the N-terminus, the 185-residue chain is Cuticle protein 18.6, isoform A (185 aa).

7 tandem repeats follow at residues 21–24 (AAPA), 33–36 (AAPV), 41–44 (AAPV), 54–57 (AAPA), 133–136 (AAPV), 139–142 (AAPV), and 150–153 (AAPV). Residues 64 to 134 (HPQYSFAYNV…KEAGAHPAAA (71 aa)) form the Chitin-binding type R&amp;R domain.

In terms of biological role, component of the cuticle of migratory locust which contains more than 100 different structural proteins. The polypeptide is Cuticle protein 18.6, isoform A (Locusta migratoria (Migratory locust)).